The chain runs to 261 residues: MTTTTTRFVQLAACAAASLLAVAASGAAAQGVGSVITQAVFNSMLPNRDNSQCPARGFYTYDAFIAAANSFPAFGTSGGSAELIRRELAAFFGQTSHETTGGTRGSSDQFQWGYCFKEEINKATSPPYYGRGPIQLTGQSNYQAAGNALGLDLVGNPDLVSTDAVVSFKTAIWFWMTAQGNKPSCHDVILGRWTPSAADTAAGRVPGYGVITNIINGGIECGVGQNDANVDRIGYYKRYCDMLGAGYGSNLDCYNQRNFAS.

The N-terminal stretch at 1–29 is a signal peptide; the sequence is MTTTTTRFVQLAACAAASLLAVAASGAAA. 2 disulfides stabilise this stretch: C53/C115 and C221/C253. Residue E98 is the Proton donor of the active site.

The protein belongs to the glycosyl hydrolase 19 family. Chitinase class II subfamily. In terms of tissue distribution, expressed in roots, leaves, sheaths and meristems.

The enzyme catalyses Random endo-hydrolysis of N-acetyl-beta-D-glucosaminide (1-&gt;4)-beta-linkages in chitin and chitodextrins.. The polypeptide is Chitinase 8 (Cht8) (Oryza sativa subsp. japonica (Rice)).